Consider the following 31-residue polypeptide: Delta-actitoxin-Dar1b (31 aa).

Belongs to the sea anemone short toxin (type III) family. Post-translationally, contains 4 disulfide bonds.

The protein resides in the secreted. The protein localises to the nematocyst. In terms of biological role, binds specifically to voltage-gated sodium channels (Nav), thereby delaying their inactivation during signal transduction. The protein is Delta-actitoxin-Dar1b of Dofleinia armata (Armed anemone).